We begin with the raw amino-acid sequence, 712 residues long: Cadherin-13 (712 aa).

Positions 1–22 are cleaved as a signal peptide; that stretch reads MQHKTQLTLSFLLSQVLLLACA. Residues 23–138 constitute a propeptide that is removed on maturation; sequence EDLECTPGFQ…GNLGIPRQKR (116 aa). The N-linked (GlcNAc...) asparagine glycan is linked to Asn86. 5 consecutive Cadherin domains span residues 143 to 245, 246 to 363, 364 to 477, 478 to 585, and 586 to 680; these read TPIL…RPMF, KEGP…PPEF, TKKE…GPVF, HPNP…VPSL, and YPTL…LQVC. Asn382, Asn500, Asn530, Asn638, and Asn671 each carry an N-linked (GlcNAc...) asparagine glycan. A lipid anchor (GPI-anchor amidated aspartate) is attached at Asp693. Residues 694–712 constitute a propeptide, removed in mature form; it reads ALHISMTLILLSLFSLFCL.

As to quaternary structure, by contrast to classical cadherins, homodimerization in trans is not mediated by cadherin EC1 domain strand-swapping, but instead through a homophilic adhesive interface which joins two elongated EC1-EC2 domains through a region near their Ca2+-binding sites to form a tetrahedral, X-like shape. Neural tissues. Also found in muscles; kidney and retina.

The protein localises to the cell membrane. It is found in the cytoplasm. Functionally, cadherins are calcium-dependent cell adhesion proteins. They preferentially interact with themselves in a homophilic manner in connecting cells; cadherins may thus contribute to the sorting of heterogeneous cell types. May act as a negative regulator of neural cell growth. The chain is Cadherin-13 (CDH13) from Gallus gallus (Chicken).